The primary structure comprises 104 residues: UPF0145 protein VIBHAR_02090 (104 aa).

This sequence belongs to the UPF0145 family.

This Vibrio campbellii (strain ATCC BAA-1116) protein is UPF0145 protein VIBHAR_02090.